A 96-amino-acid polypeptide reads, in one-letter code: MIMFLYSSFSMILFILGLFCFVSNRKHLLSMLLSLEFIVLILFFMLFIYLNLMNYENYFSMMFLTFSVCEGALGLSILVSMIRTHGNDYFQSFSIM.

Helical transmembrane passes span 2–22, 28–48, and 62–82; these read IMFL…FCFV, LLSM…MLFI, and MFLT…VSMI.

Belongs to the complex I subunit 4L family.

It localises to the mitochondrion membrane. It catalyses the reaction a ubiquinone + NADH + 5 H(+)(in) = a ubiquinol + NAD(+) + 4 H(+)(out). Functionally, core subunit of the mitochondrial membrane respiratory chain NADH dehydrogenase (Complex I) that is believed to belong to the minimal assembly required for catalysis. Complex I functions in the transfer of electrons from NADH to the respiratory chain. The immediate electron acceptor for the enzyme is believed to be ubiquinone. This chain is NADH-ubiquinone oxidoreductase chain 4L (mt:ND4L), found in Drosophila nasuta F (Fruit fly).